Reading from the N-terminus, the 464-residue chain is Siroheme synthase (464 aa).

Residues 1–203 (MKYLPLFHNL…GQGAEAERLL (203 aa)) are precorrin-2 dehydrogenase /sirohydrochlorin ferrochelatase. NAD(+)-binding positions include 22–23 (EI) and 43–44 (PE). Residue Ser128 is modified to Phosphoserine. The segment at 216–464 (GEVYLVGAGP…AWFEGAQGQI (249 aa)) is uroporphyrinogen-III C-methyltransferase. Pro225 contributes to the S-adenosyl-L-methionine binding site. Asp248 functions as the Proton acceptor in the catalytic mechanism. Residue Lys270 is the Proton donor of the active site. Residues 301–303 (GGD), Ile306, 331–332 (TA), Met383, and Gly412 each bind S-adenosyl-L-methionine.

It in the N-terminal section; belongs to the precorrin-2 dehydrogenase / sirohydrochlorin ferrochelatase family. In the C-terminal section; belongs to the precorrin methyltransferase family.

The catalysed reaction is uroporphyrinogen III + 2 S-adenosyl-L-methionine = precorrin-2 + 2 S-adenosyl-L-homocysteine + H(+). The enzyme catalyses precorrin-2 + NAD(+) = sirohydrochlorin + NADH + 2 H(+). It carries out the reaction siroheme + 2 H(+) = sirohydrochlorin + Fe(2+). It functions in the pathway cofactor biosynthesis; adenosylcobalamin biosynthesis; precorrin-2 from uroporphyrinogen III: step 1/1. The protein operates within cofactor biosynthesis; adenosylcobalamin biosynthesis; sirohydrochlorin from precorrin-2: step 1/1. Its pathway is porphyrin-containing compound metabolism; siroheme biosynthesis; precorrin-2 from uroporphyrinogen III: step 1/1. It participates in porphyrin-containing compound metabolism; siroheme biosynthesis; siroheme from sirohydrochlorin: step 1/1. It functions in the pathway porphyrin-containing compound metabolism; siroheme biosynthesis; sirohydrochlorin from precorrin-2: step 1/1. Its function is as follows. Multifunctional enzyme that catalyzes the SAM-dependent methylations of uroporphyrinogen III at position C-2 and C-7 to form precorrin-2 via precorrin-1. Then it catalyzes the NAD-dependent ring dehydrogenation of precorrin-2 to yield sirohydrochlorin. Finally, it catalyzes the ferrochelation of sirohydrochlorin to yield siroheme. The chain is Siroheme synthase from Pseudomonas fluorescens (strain Pf0-1).